Here is a 446-residue protein sequence, read N- to C-terminus: Tubulin beta-6 chain (446 aa).

An MREI motif motif is present at residues 1 to 4 (MREI). Residues Gln11, Glu69, Ser138, Gly142, Thr143, Gly144, Asn204, and Asn226 each contribute to the GTP site. Glu69 is a binding site for Mg(2+). A disordered region spans residues 419 to 446 (VSEYQQYQDATADVEEYEEAEASPEKET). Positions 430–440 (ADVEEYEEAEA) are enriched in acidic residues.

The protein belongs to the tubulin family. In terms of assembly, dimer of alpha and beta chains. A typical microtubule is a hollow water-filled tube with an outer diameter of 25 nm and an inner diameter of 15 nM. Alpha-beta heterodimers associate head-to-tail to form protofilaments running lengthwise along the microtubule wall with the beta-tubulin subunit facing the microtubule plus end conferring a structural polarity. Microtubules usually have 13 protofilaments but different protofilament numbers can be found in some organisms and specialized cells. Requires Mg(2+) as cofactor. Post-translationally, some glutamate residues at the C-terminus are polyglycylated, resulting in polyglycine chains on the gamma-carboxyl group. Glycylation is mainly limited to tubulin incorporated into axonemes (cilia and flagella) whereas glutamylation is prevalent in neuronal cells, centrioles, axonemes, and the mitotic spindle. Both modifications can coexist on the same protein on adjacent residues, and lowering polyglycylation levels increases polyglutamylation, and reciprocally. The precise function of polyglycylation is still unclear. In terms of processing, some glutamate residues at the C-terminus are polyglutamylated, resulting in polyglutamate chains on the gamma-carboxyl group. Polyglutamylation plays a key role in microtubule severing by spastin (SPAST). SPAST preferentially recognizes and acts on microtubules decorated with short polyglutamate tails: severing activity by SPAST increases as the number of glutamates per tubulin rises from one to eight, but decreases beyond this glutamylation threshold. In terms of tissue distribution, highly expressed in bone marrow.

It localises to the cytoplasm. It is found in the cytoskeleton. Functionally, tubulin is the major constituent of microtubules, a cylinder consisting of laterally associated linear protofilaments composed of alpha- and beta-tubulin heterodimers. Microtubules grow by the addition of GTP-tubulin dimers to the microtubule end, where a stabilizing cap forms. Below the cap, tubulin dimers are in GDP-bound state, owing to GTPase activity of alpha-tubulin. This Gallus gallus (Chicken) protein is Tubulin beta-6 chain.